The chain runs to 248 residues: Probable transcriptional regulatory protein Fphi_1565 (248 aa).

The protein belongs to the TACO1 family.

It is found in the cytoplasm. In Francisella philomiragia subsp. philomiragia (strain ATCC 25017 / CCUG 19701 / FSC 153 / O#319-036), this protein is Probable transcriptional regulatory protein Fphi_1565.